Here is a 174-residue protein sequence, read N- to C-terminus: NADH-quinone oxidoreductase subunit C (174 aa).

This sequence belongs to the complex I 30 kDa subunit family. As to quaternary structure, NDH-1 is composed of 14 different subunits. Subunits NuoB, C, D, E, F, and G constitute the peripheral sector of the complex.

The protein resides in the cell membrane. It carries out the reaction a quinone + NADH + 5 H(+)(in) = a quinol + NAD(+) + 4 H(+)(out). NDH-1 shuttles electrons from NADH, via FMN and iron-sulfur (Fe-S) centers, to quinones in the respiratory chain. The immediate electron acceptor for the enzyme in this species is believed to be ubiquinone. Couples the redox reaction to proton translocation (for every two electrons transferred, four hydrogen ions are translocated across the cytoplasmic membrane), and thus conserves the redox energy in a proton gradient. This Roseiflexus sp. (strain RS-1) protein is NADH-quinone oxidoreductase subunit C.